A 1119-amino-acid chain; its full sequence is Leucine-rich repeats and immunoglobulin-like domains protein 3 (1119 aa).

A signal peptide spans 1-24; that stretch reads MSAPSLRARAAGLGLLLCAVLGRA. Residues 38-74 enclose the LRRNT domain; the sequence is PSGVAAERPCPTTCRCLGDLLDCSRKRLARLPEPLPS. LRR repeat units lie at residues 75-96, 99-120, 122-142, 146-167, 168-189, 193-214, 216-237, 240-261, 264-285, 288-309, 312-333, 336-357, 360-382, 387-408, and 411-432; these read WVAR…SMSH, SLRE…GPVS, NITL…EHLK, SLET…FPAL, QLKY…YFDN, TLLV…MFKL, QLQH…TFQG, ALKS…AFWG, NMEI…WLYG, MLQE…AWEF, KLSE…SFLG, LLNT…AFRG, SLKT…NGAF, KLRR…AFTG, and ALEH…AFSQ. Residues asparagine 122 and asparagine 156 are each glycosylated (N-linked (GlcNAc...) asparagine). N-linked (GlcNAc...) asparagine glycosylation occurs at asparagine 274. N-linked (GlcNAc...) asparagine glycosylation is found at asparagine 442, asparagine 469, and asparagine 515. The LRRCT domain maps to 444–495; that stretch reads SSLLCDCQLKWLPQWVAENNFQSFVNASCAHPQLLKGRSIFAVSPDGFVCDD. Ig-like C2-type domains follow at residues 499–598, 603–692, and 697–783; these read PQIT…AKLT, PSFT…ATLT, and PSFL…VRLS. Intrachain disulfides connect cysteine 520–cysteine 581 and cysteine 624–cysteine 676. Residues asparagine 688 and asparagine 729 are each glycosylated (N-linked (GlcNAc...) asparagine). Cysteine 718 and cysteine 767 are joined by a disulfide. A helical membrane pass occupies residues 810–830; it reads VVIIAVVCCVVGTSLVWVVII. Asparagine 905, asparagine 987, asparagine 999, and asparagine 1016 each carry an N-linked (GlcNAc...) asparagine glycan. Residues 1073–1093 form a disordered region; sequence SSPDLDSGSEEDGKERTDFQE. The span at 1083–1093 shows a compositional bias: basic and acidic residues; that stretch reads EDGKERTDFQE.

Interacts with EGFR, ERBB2 and ERBB4 (in vitro). As to expression, widely expressed.

It is found in the cell membrane. The protein localises to the cytoplasmic vesicle membrane. In terms of biological role, may play a role in craniofacial and inner ear morphogenesis during embryonic development. May act within the otic vesicle epithelium to control formation of the lateral semicircular canal in the inner ear, possibly by restricting the expression of NTN1. The polypeptide is Leucine-rich repeats and immunoglobulin-like domains protein 3 (LRIG3) (Homo sapiens (Human)).